Here is a 403-residue protein sequence, read N- to C-terminus: S-adenosylmethionine synthase (403 aa).

His-16 lines the ATP pocket. Asp-18 lines the Mg(2+) pocket. Position 44 (Glu-44) interacts with K(+). Glu-57 and Gln-100 together coordinate L-methionine. Positions 100–110 are flexible loop; it reads QSPDIAQGVDR. The segment at 106–126 is disordered; sequence QGVDRSYESRSGSASTDAHDL. ATP-binding positions include 176–178, 248–249, Asp-257, 263–264, Ala-280, and Lys-284; these read DGK, KF, and RK. Asp-257 lines the L-methionine pocket. Lys-288 serves as a coordination point for L-methionine.

Belongs to the AdoMet synthase family. As to quaternary structure, homotetramer; dimer of dimers. Mg(2+) is required as a cofactor. Requires K(+) as cofactor.

The protein resides in the cytoplasm. It catalyses the reaction L-methionine + ATP + H2O = S-adenosyl-L-methionine + phosphate + diphosphate. The protein operates within amino-acid biosynthesis; S-adenosyl-L-methionine biosynthesis; S-adenosyl-L-methionine from L-methionine: step 1/1. Catalyzes the formation of S-adenosylmethionine (AdoMet) from methionine and ATP. The overall synthetic reaction is composed of two sequential steps, AdoMet formation and the subsequent tripolyphosphate hydrolysis which occurs prior to release of AdoMet from the enzyme. This Clavibacter michiganensis subsp. michiganensis (strain NCPPB 382) protein is S-adenosylmethionine synthase.